The sequence spans 205 residues: Small ribosomal subunit protein uS4 (205 aa).

The disordered stretch occupies residues 18 to 45; sequence NIWGRPKSPVNRREYGPGQHGQRRKGKL. The 64-residue stretch at 94 to 157 folds into the S4 RNA-binding domain; sequence RRLDTVVYRA…KQLAFVLEAS (64 aa).

This sequence belongs to the universal ribosomal protein uS4 family. As to quaternary structure, part of the 30S ribosomal subunit. Contacts protein S5. The interaction surface between S4 and S5 is involved in control of translational fidelity.

In terms of biological role, one of the primary rRNA binding proteins, it binds directly to 16S rRNA where it nucleates assembly of the body of the 30S subunit. With S5 and S12 plays an important role in translational accuracy. The polypeptide is Small ribosomal subunit protein uS4 (Rhodopseudomonas palustris (strain BisA53)).